The primary structure comprises 78 residues: Major outer membrane lipoprotein Lpp 1 (78 aa).

The signal sequence occupies residues 1-20; sequence MNRTKLVLGAVILGSTLLAG. C21 carries the N-palmitoyl cysteine lipid modification. C21 is lipidated: S-diacylglycerol cysteine. 2 repeats span residues 24–34 and 38–48; these read NAKIDQLSSDV and NAKVDQLSNDV. The stretch at 27 to 75 forms a coiled coil; the sequence is IDQLSSDVQTLNAKVDQLSNDVNAMRSDVQAAKDDAARANQRLDNQATK. The disordered stretch occupies residues 56-78; it reads QAAKDDAARANQRLDNQATKYRK. Residues 68–78 show a composition bias toward polar residues; the sequence is RLDNQATKYRK. N6-murein peptidoglycan lysine is present on K78.

This sequence belongs to the Lpp family. In terms of assembly, homotrimer.

It localises to the cell outer membrane. The protein resides in the secreted. Its subcellular location is the cell wall. A highly abundant outer membrane lipoprotein that controls the distance between the inner and outer membranes. The only protein known to be covalently linked to the peptidoglycan network (PGN). Also non-covalently binds the PGN. The link between the cell outer membrane and PGN contributes to maintenance of the structural and functional integrity of the cell envelope, and maintains the correct distance between the PGN and the outer membrane. This is Major outer membrane lipoprotein Lpp 1 from Salmonella paratyphi A (strain ATCC 9150 / SARB42).